The sequence spans 583 residues: ATP-dependent lipid A-core flippase (583 aa).

A run of 5 helical transmembrane segments spans residues 27 to 47 (LAVA…MVSL), 69 to 89 (LLVF…TYCL), 142 to 162 (ALVS…LMFY), 165 to 185 (WQLS…IGFV), and 249 to 269 (AAAN…VLYL). An ABC transmembrane type-1 domain is found at 28–310 (AVAVVALIIN…LTNVTSQFQR (283 aa)). Positions 342–578 (VNVKDISFTY…DGAYAQLHRI (237 aa)) constitute an ABC transporter domain. 376–383 (GRSGSGKS) is an ATP binding site.

It belongs to the ABC transporter superfamily. Lipid exporter (TC 3.A.1.106) family. As to quaternary structure, homodimer.

The protein resides in the cell inner membrane. It carries out the reaction ATP + H2O + lipid A-core oligosaccharideSide 1 = ADP + phosphate + lipid A-core oligosaccharideSide 2.. Involved in lipopolysaccharide (LPS) biosynthesis. Translocates lipid A-core from the inner to the outer leaflet of the inner membrane. Transmembrane domains (TMD) form a pore in the inner membrane and the ATP-binding domain (NBD) is responsible for energy generation. This chain is ATP-dependent lipid A-core flippase, found in Vibrio vulnificus (strain YJ016).